The following is a 416-amino-acid chain: Serine hydroxymethyltransferase (416 aa).

Residues L121 and 125 to 127 (GHL) each bind (6S)-5,6,7,8-tetrahydrofolate. K229 is modified (N6-(pyridoxal phosphate)lysine).

This sequence belongs to the SHMT family. As to quaternary structure, homodimer. The cofactor is pyridoxal 5'-phosphate.

The protein resides in the cytoplasm. It catalyses the reaction (6R)-5,10-methylene-5,6,7,8-tetrahydrofolate + glycine + H2O = (6S)-5,6,7,8-tetrahydrofolate + L-serine. Its pathway is one-carbon metabolism; tetrahydrofolate interconversion. It functions in the pathway amino-acid biosynthesis; glycine biosynthesis; glycine from L-serine: step 1/1. In terms of biological role, catalyzes the reversible interconversion of serine and glycine with tetrahydrofolate (THF) serving as the one-carbon carrier. This reaction serves as the major source of one-carbon groups required for the biosynthesis of purines, thymidylate, methionine, and other important biomolecules. Also exhibits THF-independent aldolase activity toward beta-hydroxyamino acids, producing glycine and aldehydes, via a retro-aldol mechanism. The sequence is that of Serine hydroxymethyltransferase from Neisseria gonorrhoeae (strain NCCP11945).